Consider the following 370-residue polypeptide: Molybdenum import ATP-binding protein ModC (370 aa).

Residues 2 to 233 (SVRVDIGHRL…LDLLPAEERG (232 aa)) enclose the ABC transporter domain. 31–38 (GPSGSGKT) serves as a coordination point for ATP. Positions 293–359 (GLSALNILPG…VKTVSFDRAN (67 aa)) constitute a Mop domain.

This sequence belongs to the ABC transporter superfamily. Molybdate importer (TC 3.A.1.8) family. The complex is composed of two ATP-binding proteins (ModC), two transmembrane proteins (ModB) and a solute-binding protein (ModA).

It is found in the cell inner membrane. It carries out the reaction molybdate(out) + ATP + H2O = molybdate(in) + ADP + phosphate + H(+). Functionally, part of the ABC transporter complex ModABC involved in molybdenum import. Responsible for energy coupling to the transport system. This Mesorhizobium japonicum (strain LMG 29417 / CECT 9101 / MAFF 303099) (Mesorhizobium loti (strain MAFF 303099)) protein is Molybdenum import ATP-binding protein ModC.